The following is a 616-amino-acid chain: MPKYRSATTTHGRNMAGARALWRATGMTDADFGKPIIAVVNSFTQFVPGHVHLRDLGKLVAEQIEAAGGVAKEFNTIAVDDGIAMGHGGMLYSLPSRELIADSVEYMVNAHCADAMVCISNCDKITPGMLMASLRLNIPVIFVSGGPMEAGKTKLSDQIIKLDLVDAMIQGADPKVSDSQSDQVERSACPTCGSCSGMFTANSMNCLTEALGLSQPGNGSLLATHADRKQLFLNAGKRIVELTKRYYEQNDESALPRNIASKAAFENAMTLDIAMGGSTNTVLHLLAAAQEAEIDFTMSDIDKLSRKVPQLCKVAPSTQKYHMEDVHRAGGVIGILGELDRAGLLNRDVKNVLGLTLPQTLEQYDVMLTQDDAVKNMFRAGPAGIRTTQAFSQDCRWDSLDDDRANGCIRSLEHAYSKDGGLAVLYGNFAENGCIVKTAGVDDSILKFTGPAKVYESQDDAVEAILGGKVVAGDVVVIRYEGPKGGPGMQEMLYPTSFLKSMGLGKVCALITDGRFSGGTSGLSIGHVSPEAASGGSIGLIEDGDLIAIDIPNRGIQLQVSDAELAARREAQEARGDKAWTPKNRERQVSFALRAYASLATSADKGAVRDKSKLGG.

D81 lines the Mg(2+) pocket. C122 serves as a coordination point for [2Fe-2S] cluster. D123 and K124 together coordinate Mg(2+). The residue at position 124 (K124) is an N6-carboxylysine. Residue C195 coordinates [2Fe-2S] cluster. Residue E491 coordinates Mg(2+). The active-site Proton acceptor is S517.

It belongs to the IlvD/Edd family. As to quaternary structure, homodimer. Requires [2Fe-2S] cluster as cofactor. The cofactor is Mg(2+).

It catalyses the reaction (2R)-2,3-dihydroxy-3-methylbutanoate = 3-methyl-2-oxobutanoate + H2O. The enzyme catalyses (2R,3R)-2,3-dihydroxy-3-methylpentanoate = (S)-3-methyl-2-oxopentanoate + H2O. The protein operates within amino-acid biosynthesis; L-isoleucine biosynthesis; L-isoleucine from 2-oxobutanoate: step 3/4. It participates in amino-acid biosynthesis; L-valine biosynthesis; L-valine from pyruvate: step 3/4. Functionally, functions in the biosynthesis of branched-chain amino acids. Catalyzes the dehydration of (2R,3R)-2,3-dihydroxy-3-methylpentanoate (2,3-dihydroxy-3-methylvalerate) into 2-oxo-3-methylpentanoate (2-oxo-3-methylvalerate) and of (2R)-2,3-dihydroxy-3-methylbutanoate (2,3-dihydroxyisovalerate) into 2-oxo-3-methylbutanoate (2-oxoisovalerate), the penultimate precursor to L-isoleucine and L-valine, respectively. The protein is Dihydroxy-acid dehydratase of Escherichia coli O17:K52:H18 (strain UMN026 / ExPEC).